We begin with the raw amino-acid sequence, 125 residues long: Large ribosomal subunit protein bL12 (125 aa).

This sequence belongs to the bacterial ribosomal protein bL12 family. As to quaternary structure, homodimer. Part of the ribosomal stalk of the 50S ribosomal subunit. Forms a multimeric L10(L12)X complex, where L10 forms an elongated spine to which 2 to 4 L12 dimers bind in a sequential fashion. Binds GTP-bound translation factors.

Forms part of the ribosomal stalk which helps the ribosome interact with GTP-bound translation factors. Is thus essential for accurate translation. The polypeptide is Large ribosomal subunit protein bL12 (Anaeromyxobacter sp. (strain Fw109-5)).